We begin with the raw amino-acid sequence, 300 residues long: Epimerase family protein SAB0724c (300 aa).

This sequence belongs to the NAD(P)-dependent epimerase/dehydratase family. SDR39U1 subfamily.

This Staphylococcus aureus (strain bovine RF122 / ET3-1) protein is Epimerase family protein SAB0724c.